Here is a 184-residue protein sequence, read N- to C-terminus: Large ribosomal subunit protein uL18 (184 aa).

This sequence belongs to the universal ribosomal protein uL18 family. In terms of assembly, part of the 50S ribosomal subunit. Contacts the 5S and 23S rRNAs.

In terms of biological role, this is one of the proteins that bind and probably mediate the attachment of the 5S RNA into the large ribosomal subunit, where it forms part of the central protuberance. In Natronomonas pharaonis (strain ATCC 35678 / DSM 2160 / CIP 103997 / JCM 8858 / NBRC 14720 / NCIMB 2260 / Gabara) (Halobacterium pharaonis), this protein is Large ribosomal subunit protein uL18.